Here is a 168-residue protein sequence, read N- to C-terminus: Lipoprotein signal peptidase (168 aa).

Transmembrane regions (helical) follow at residues 8-28, 61-81, and 91-111; these read LYYL…WLVV, GQFW…VIYI, and FGIA…DRIF. Catalysis depends on residues aspartate 117 and aspartate 135. Residues 128-148 form a helical membrane-spanning segment; it reads FPIFNVADAALTIGVALMFIY.

This sequence belongs to the peptidase A8 family.

It is found in the cell membrane. It catalyses the reaction Release of signal peptides from bacterial membrane prolipoproteins. Hydrolyzes -Xaa-Yaa-Zaa-|-(S,diacylglyceryl)Cys-, in which Xaa is hydrophobic (preferably Leu), and Yaa (Ala or Ser) and Zaa (Gly or Ala) have small, neutral side chains.. It functions in the pathway protein modification; lipoprotein biosynthesis (signal peptide cleavage). In terms of biological role, this protein specifically catalyzes the removal of signal peptides from prolipoproteins. This Anoxybacillus flavithermus (strain DSM 21510 / WK1) protein is Lipoprotein signal peptidase.